A 236-amino-acid chain; its full sequence is CD81 antigen (236 aa).

Over 1–12 (MGVEGCTKCIKY) the chain is Cytoplasmic. The helical transmembrane segment at 13 to 33 (LLFVFNFVFWLAGGVILGVAL) threads the bilayer. Residues 34–63 (WLRHDPQTTSLLYLELGNKPAPNTFYVGIY) are Extracellular-facing. A helical transmembrane segment spans residues 64–84 (ILIAVGAVMMFVGFLGCYGAI). Topologically, residues 85-89 (QESQC) are cytoplasmic. Residues 90–112 (LLGTFFTCLVILFACEVAAGIWG) form a helical membrane-spanning segment. At 113-201 (FVNKDQIAKD…QKIDELFSGK (89 aa)) the chain is on the extracellular side. Disulfide bonds link cysteine 156-cysteine 190 and cysteine 157-cysteine 175. Residues 202–224 (LYLIGIAAIVVAVIMIFEMILSM) form a helical membrane-spanning segment. Glutamate 219 contributes to the cholesterol binding site. Over 225-236 (VLCCGIRNSSVY) the chain is Cytoplasmic.

Belongs to the tetraspanin (TM4SF) family. Homodimer. Part of a complex composed of CD19, CR2/CD21, CD81 and IFITM1/CD225 in the membrane of mature B cells. Interacts (via the second extracellular domain) with CD19; this interaction is initiated early during biosynthesis in the ER and enables trafficking of only properly folded CD19. Part of a complex that includes MHC class II/HLA-DR molecules and IFITM1. Interacts with IFITM1. Interacts with IFITM2 and IFITM3. Part of integrin-tetraspanin complex composed of CD9, CD81, beta-1 and beta-2 integrins in the membrane of monocyte/macrophages. Interacts (via the second extracellular domain) with integrin ITGAV:ITGB3. Interacts with CD247/CD3 zeta, ICAM1 and CD9 at the immune synapse on T cell membrane. Part of a GPCR-tetraspanin complex consisting at least of ADGRG1, CD81, possibly CD9, and GNA11 in which CD81 enhances the association of ADGRG1 with GNA11. Part of a complex composed of CD9, CD81, PTGFRN and IGSF8. Interacts directly with IGSF8. Interacts with CD53 and SCIMP. Interacts with SAMHD1 (via its C-terminus). Interacts with glypican GPC3 and with the transcriptional repressor HHEX; binding to GPC3 decreases the availability of free CD81 for binding to HHEX, resulting in nuclear translocation of HHEX and transcriptional repression. Interacts with CLDN1. Interacts with CLDN6 and CLDN9. Post-translationally, not glycosylated. In terms of processing, likely constitutively palmitoylated at low levels. Protein palmitoylation is up-regulated upon coligation of BCR and CD9-C2R-CD81 complexes in lipid rafts. As to expression, expressed in oocytes (at protein level). Highly expressed in granulosa cells. Expressed in skeletal muscle mainly in endothelial cells of endomysial capillaries, in satellite cells and myoblasts (at protein level). Expressed in hepatocytes (at protein level).

The protein resides in the cell membrane. It localises to the basolateral cell membrane. Functionally, structural component of specialized membrane microdomains known as tetraspanin-enriched microdomains (TERMs), which act as platforms for receptor clustering and signaling. Essential for trafficking and compartmentalization of CD19 receptor on the cell surface of activated B cells. Upon initial encounter with a microbial pathogen, enables the assembly of CD19-CR2 and B cell receptor complexes at signaling TERMs, lowering the threshold dose of antigen required to trigger B cell clonal expansion and humoral immune response. In T cells, associates with CD4 or CD8 coreceptors and defines the maturation state of antigen-induced synapses with B cells. Facilitates localization of CD3 in these immune synapses, required for costimulation and sustained activation of T cells, preferentially triggering T helper type 2 immune response. Can act both as positive and negative regulator of homotypic or heterotypic cell-cell fusion processes. In myoblasts, associates with another tetraspanin CD9 in complex with PTGFRN and inhibits myotube fusion during muscle regeneration. In macrophages, associates with CD9 and beta-1 and beta-2 integrins, and prevents macrophage fusion into multinucleated giant cells specialized in ingesting complement-opsonized large particles. Also prevents the fusion between mononuclear cell progenitors into osteoclasts in charge of bone resorption. Positively regulates sperm-egg fusion and may be involved in the acrosome reaction. Regulates protein trafficking in intracellular compartments. In T cells, associates with dNTPase SAMHD1 and defines its subcellular location, enabling its degradation by the proteasome and thereby controlling intracellular dNTP levels. Also regulates integrin-dependent migration of macrophages, particularly relevant for inflammatory response in the lung. (Microbial infection) Specifically required for Plasmodium yoelii infectivity of hepatocytes, controlling sporozoite entry in hepatocytes via the parasitophorous vacuole and subsequent parasite differentiation to exoerythrocytic forms. This chain is CD81 antigen, found in Mus musculus (Mouse).